The primary structure comprises 115 residues: uncharacterized protein (115 aa).

Positions 1-86 are disordered; the sequence is RRPARSGGDG…LSSQLVRPSR (86 aa).

This is an uncharacterized protein from Homo sapiens (Human).